The primary structure comprises 530 residues: N-acetylmuramoyl-L-alanine amidase (530 aa).

The signal sequence occupies residues Met-1–Ala-22. 3 N-linked (GlcNAc...) asparagine glycosylation sites follow: Asn-61, Asn-80, and Asn-174. Ser-219 carries the post-translational modification Phosphoserine. Asn-335 carries N-linked (GlcNAc...) asparagine glycosylation. The region spanning Phe-386 to Gly-512 is the N-acetylmuramoyl-L-alanine amidase domain. His-390 serves as a coordination point for Zn(2+). The cysteines at positions 399 and 405 are disulfide-linked. An N-linked (GlcNAc...) asparagine glycan is attached at Asn-465. Residues His-502 and Cys-510 each coordinate Zn(2+).

The protein belongs to the N-acetylmuramoyl-L-alanine amidase 2 family. The cofactor is Zn(2+). In terms of tissue distribution, strongly expressed in liver and fetal liver.

The protein localises to the secreted. It is found in the membrane. It carries out the reaction Hydrolyzes the link between N-acetylmuramoyl residues and L-amino acid residues in certain cell-wall glycopeptides.. In terms of biological role, may play a scavenger role by digesting biologically active peptidoglycan (PGN) into biologically inactive fragments. Has no direct bacteriolytic activity. The polypeptide is N-acetylmuramoyl-L-alanine amidase (Pglyrp2) (Mus musculus (Mouse)).